The primary structure comprises 1481 residues: Cystic fibrosis transmembrane conductance regulator (1481 aa).

Residues 1-77 (MQRSPLEKAS…KLINALRRCF (77 aa)) are Cytoplasmic-facing. The chain crosses the membrane as a helical span at residues 78–98 (FWRFMFYGILLYLGEVTKAVQ). The 285-residue stretch at 81-365 (FMFYGILLYL…WAVQTWYDSL (285 aa)) folds into the ABC transmembrane type-1 1 domain. Residues 99 to 122 (PLLLGRIIASYDPDNKEERSIAIY) lie on the Extracellular side of the membrane. A helical membrane pass occupies residues 123 to 146 (LGIGLCLLFIVRTLLLHPAIFGLH). Topologically, residues 147–195 (HIGMQMRIAMFSLIYKKTLKLSSRVLDKISIGQLVSLLSNNLNKFDEGL) are cytoplasmic. Residues 196-216 (ALAHFVWIVPLQVALLMGLIW) traverse the membrane as a helical segment. At 217–222 (ELLQAS) the chain is on the extracellular side. A helical transmembrane segment spans residues 223 to 243 (AFCGLGFLIVLALFQAGLGRM). The Cytoplasmic portion of the chain corresponds to 244–298 (MMKYRDQRAGKINERLVITSEMIENIQSVKAYCWEEAMEKMIENLRQTELKLTRK). The chain crosses the membrane as a helical span at residues 299–319 (AAYVRYFNSSAFFFSGFFVVF). Residues 320–339 (LSVLPYALIKGIVLRKIFTT) lie on the Extracellular side of the membrane. The chain crosses the membrane as a helical span at residues 340–358 (ISFCIVLRMAVTRQFPWAV). At 359–858 (QTWYDSLGAI…YLRYITVHKS (500 aa)) the chain is on the cytoplasmic side. ATP is bound by residues Trp-401, Ser-434, 458–465 (GSTGAGKT), and Gln-493. One can recognise an ABC transporter 1 domain in the interval 423 to 646 (NDDDSLFFSN…RPDFSSKLMG (224 aa)). A lipid anchor (S-palmitoyl cysteine) is attached at Cys-524. Phosphoserine is present on residues Ser-549 and Ser-660. A disordered R region region spans residues 654–831 (SAERRNSILT…EEINEEDLKE (178 aa)). Residue Ser-670 is modified to Phosphoserine; by PKA. Ser-686 is subject to Phosphoserine. A Glycyl lysine isopeptide (Lys-Gly) (interchain with G-Cter in ubiquitin) cross-link involves residue Lys-688. Phosphoserine occurs at positions 700 and 712. Thr-717 is subject to Phosphothreonine. 6 positions are modified to phosphoserine: Ser-737, Ser-753, Ser-768, Ser-790, Ser-795, and Ser-813. Residues 859–879 (LIFVLIWCLVIFLAEVAASLV) form a helical membrane-spanning segment. Positions 859–1155 (LIFVLIWCLV…AVNSSIDVDS (297 aa)) constitute an ABC transmembrane type-1 2 domain. The Extracellular portion of the chain corresponds to 880 to 918 (VLWFLGNTPPQDKGNSTYSRNNSYAVIITRTSSYYVFYI). 2 N-linked (GlcNAc...) asparagine glycosylation sites follow: Asn-894 and Asn-900. Residues 919 to 939 (YVGVADTLLAMGFFRGLPLVH) form a discontinuously helical membrane-spanning segment. The Cytoplasmic portion of the chain corresponds to 940-990 (TLITVSKILHHKMLHSVLQAPMSTLNTLKAGGILNRFSKDIAILDDLLPLT). The helical transmembrane segment at 991 to 1011 (IFDFIQLLLIVIGAIAVVAVL) threads the bilayer. The Extracellular portion of the chain corresponds to 1012-1013 (QP). A helical transmembrane segment spans residues 1014-1034 (YIFVATVPVIVAFIMLRAYFL). At 1035-1095 (QTSQQLKQLE…TANWFLYLST (61 aa)) the chain is on the cytoplasmic side. The helical transmembrane segment at 1096–1116 (LRWFQMRIEMIFVIFFIAVTF) threads the bilayer. Residues 1117-1130 (ISILTTGEGEGTVG) are Extracellular-facing. Residues 1131 to 1151 (IILTLAMNIMSTLQWAVNSSI) form a helical membrane-spanning segment. At 1152 to 1481 (DVDSLMRSVS…TEEEVQDTRL (330 aa)) the chain is on the cytoplasmic side. In terms of domain architecture, ABC transporter 2 spans 1211-1444 (MTVKDLTAKY…RSLFQQAISP (234 aa)). ATP-binding positions include Tyr-1220 and 1245 to 1252 (GRTGSGKS). An interaction with GORASP2 region spans residues 1387 to 1481 (RTLKQAFADC…TEEEVQDTRL (95 aa)). The S-palmitoyl cysteine moiety is linked to residue Cys-1396. Phosphoserine occurs at positions 1445 and 1457. The PDZ-binding motif lies at 1479–1481 (TRL).

The protein belongs to the ABC transporter superfamily. ABCC family. CFTR transporter (TC 3.A.1.202) subfamily. In terms of assembly, monomer; does not require oligomerization for channel activity. May form oligomers in the membrane. Interacts with SLC26A3, SLC26A6 and NHERF1. Interacts with SHANK2. Interacts with MYO6. Interacts (via C-terminus) with GOPC (via PDZ domain); this promotes CFTR internalization and thereby decreases channel activity. Interacts with SLC4A7 through NHERF1. Found in a complex with MYO5B and RAB11A. Interacts with ANO1. Interacts with SLC26A8. Interacts with AHCYL1; the interaction increases CFTR activity. Interacts with CSE1L. The core-glycosylated form interacts with GORASP2 (via PDZ GRASP-type 1 domain) in respone to ER stress. Interacts with MARCHF2; the interaction leads to CFTR ubiqtuitination and degradation. Interacts with ADGRG2. In terms of processing, N-glycosylated. Phosphorylated; cAMP treatment promotes phosphorylation and activates the channel. Dephosphorylation decreases the ATPase activity (in vitro). Phosphorylation at PKA sites activates the channel. Phosphorylation at PKC sites enhances the response to phosphorylation by PKA. Phosphorylated by AMPK; this inhibits channel activity. Post-translationally, ubiquitinated, leading to its degradation in the lysosome. Deubiquitination by USP10 in early endosomes enhances its endocytic recycling to the cell membrane. Ubiquitinated by RNF185 during ER stress. Ubiquitinated by MARCHF2.

It localises to the apical cell membrane. The protein resides in the early endosome membrane. It is found in the cell membrane. The protein localises to the recycling endosome membrane. Its subcellular location is the endoplasmic reticulum membrane. It localises to the nucleus. The catalysed reaction is ATP + H2O + closed Cl(-) channel = ADP + phosphate + open Cl(-) channel.. It catalyses the reaction chloride(in) = chloride(out). It carries out the reaction hydrogencarbonate(in) = hydrogencarbonate(out). The enzyme catalyses ATP + H2O = ADP + phosphate + H(+). Its function is as follows. Epithelial ion channel that plays an important role in the regulation of epithelial ion and water transport and fluid homeostasis. Mediates the transport of chloride ions across the cell membrane. Possesses an intrinsic ATPase activity and utilizes ATP to gate its channel; the passive flow of anions through the channel is gated by cycles of ATP binding and hydrolysis by the ATP-binding domains. The ion channel is also permeable to HCO(3)(-); selectivity depends on the extracellular chloride concentration. Exerts its function also by modulating the activity of other ion channels and transporters. Contributes to the regulation of the pH and the ion content of the epithelial fluid layer. Modulates the activity of the epithelial sodium channel (ENaC) complex, in part by regulating the cell surface expression of the ENaC complex. May regulate bicarbonate secretion and salvage in epithelial cells by regulating the transporter SLC4A7. Can inhibit the chloride channel activity of ANO1. Plays a role in the chloride and bicarbonate homeostasis during sperm epididymal maturation and capacitation. In Macaca nemestrina (Pig-tailed macaque), this protein is Cystic fibrosis transmembrane conductance regulator.